The primary structure comprises 212 residues: Cytidylate kinase (212 aa).

11–19 (GPAASGKGT) is a binding site for ATP. The segment at 50-69 (GGDPADPAASEEQARSLSRL) is disordered.

This sequence belongs to the cytidylate kinase family. Type 1 subfamily.

The protein localises to the cytoplasm. The catalysed reaction is CMP + ATP = CDP + ADP. It carries out the reaction dCMP + ATP = dCDP + ADP. This chain is Cytidylate kinase, found in Acidiphilium cryptum (strain JF-5).